The primary structure comprises 1604 residues: Metabotropic glutamate receptor-like protein R (1604 aa).

An N-terminal signal peptide occupies residues 1–27; the sequence is MVIKKPFIFIFICFLICLLICIDLTNC. Topologically, residues 28-1149 are extracellular; that stretch reads NTINNNNNNN…TDVSKTKIAK (1122 aa). Residues 38-69 show a composition bias toward low complexity; it reads NNNNNNNNNNNNNNNNNNNNNNNNNNNNNNDN. Positions 38–72 are disordered; the sequence is NNNNNNNNNNNNNNNNNNNNNNNNNNNNNNDNNEN. Residues 98–133 adopt a coiled-coil conformation; it reads DFYINKIKKEIKDREKYKNNIENEILKINSQKKRKK. The tract at residues 213–263 is disordered; that stretch reads NNNNNNNNNNNNNNNNNNKNNNNNNNNKNNNNNNNNKNNNNNNNNKNNNKN. N-linked (GlcNAc...) asparagine glycans are attached at residues N285, N327, N359, N375, N489, N498, N525, N577, N593, N624, N768, N837, N841, N851, N864, N876, N885, N888, N913, N967, N991, N1097, and N1109. Residues 1150-1170 form a helical membrane-spanning segment; the sequence is IIIGISAIIVSIGVLITAILT. Topologically, residues 1171–1184 are cytoplasmic; that stretch reads FIYRKRKIMRYSNP. The helical transmembrane segment at 1185-1205 threads the bilayer; it reads VFLLIILVGCVCGLVSTFVSF. The Extracellular portion of the chain corresponds to 1206–1211; it reads STTSAT. Residues 1212–1232 traverse the membrane as a helical segment; the sequence is CSIRMVLIPLFFFIITSAIFI. Residues 1233 to 1256 lie on the Cytoplasmic side of the membrane; it reads KQYRVYCLIRGVEELHDMSIENSY. Residues 1257–1277 traverse the membrane as a helical segment; that stretch reads LLKLQSFILIIPAILIAVSVI. Residues 1278–1304 are Extracellular-facing; the sequence is ATRMHRKYNFDLQKETIQAYCYSKNFY. A helical transmembrane segment spans residues 1305–1325; that stretch reads IIFICLALYEFSILLYGCWIV. Over 1326–1340 the chain is Cytoplasmic; that stretch reads IKCRQYRSFPGSFNE. The chain crosses the membrane as a helical span at residues 1341–1361; the sequence is FFYIGVLIYVLTVILVVSIPI. At 1362–1372 the chain is on the extracellular side; it reads GFALLNSALTD. The helical transmembrane segment at 1373 to 1393 threads the bilayer; the sequence is FLLYSIPILVLIVAIIGLLFA. Topologically, residues 1394–1604 are cytoplasmic; sequence PKFYFLFRTD…KSSQNSPLLD (211 aa). The tract at residues 1457 to 1604 is disordered; it reads TGSNTSDDVS…KSSQNSPLLD (148 aa). Low complexity-rich tracts occupy residues 1471 to 1527 and 1534 to 1556; these read FDSP…NKNN and SSSN…GRSS. The segment covering 1563 to 1572 has biased composition (basic residues); it reads NNKKNRRKNS. A compositionally biased stretch (polar residues) spans 1573–1584; that stretch reads LRTPILNSLLSP.

It belongs to the G-protein coupled receptor 3 family. GABA-B receptor subfamily.

The protein resides in the membrane. In Dictyostelium discoideum (Social amoeba), this protein is Metabotropic glutamate receptor-like protein R (grlR).